Reading from the N-terminus, the 2349-residue chain is Reducing polyketide synthase AFT16-1 (2349 aa).

Positions 1 to 14 (MNGKSRDNGHDGKR) are enriched in basic and acidic residues. Disordered regions lie at residues 1–21 (MNGK…VPAE) and 37–80 (TNPS…TSNS). In terms of domain architecture, Ketosynthase family 3 (KS3) spans 20–462 (AEPIAIVGTA…GTNAHTILES (443 aa)). Catalysis depends on for beta-ketoacyl synthase activity residues C194, H333, and H382. The tract at residues 578-888 (VFTGQGAQWP…LLYKGVLERF (311 aa)) is malonyl-CoA:ACP transacylase (MAT) domain. The N-terminal hotdog fold stretch occupies residues 958-1092 (HPLLGFRSVD…GDILLSHFAK (135 aa)). The dehydratase (DH) domain stretch occupies residues 958–1263 (HPLLGFRSVD…QVEGLKFSCM (306 aa)). A PKS/mFAS DH domain is found at 958 to 1269 (HPLLGFRSVD…FSCMYPAQET (312 aa)). H990 (proton acceptor; for dehydratase activity) is an active-site residue. A C-terminal hotdog fold region spans residues 1111 to 1269 (MSSVEPSLFY…FSCMYPAQET (159 aa)). D1170 functions as the Proton donor; for dehydratase activity in the catalytic mechanism. Positions 1976 to 2164 (SPNKTYLLVG…VVGVGYVARA (189 aa)) are ketoreductase (KR) domain. The region spanning 2273–2347 (EILSGSLKQK…GLCLEAIGQW (75 aa)) is the Carrier domain. Residue S2307 is modified to O-(pantetheine 4'-phosphoryl)serine.

It functions in the pathway mycotoxin biosynthesis. Reducing polyketide synthase; part of the gene clusters that mediate the biosynthesis of the host-selective toxins (HSTs) AF-toxins responsible for Alternaria black spot of strawberry disease by the strawberry pathotype. AF-toxin I and III are valine derivatives of 2,3-dyhydroxy-isovaleric acid and 2-hydroxy-isovaleric acid respectively, while AF II is an isoleucine derivative of 2-hydroxy-valeric acid. These derivatives are bound to a 9,10-epoxy-8-hydroxy-9-methyl-decatrienoic acid (EDA) moiety. On cellular level, AF-toxins affect plasma membrane of susceptible cells and cause a sudden increase in loss of K(+) after a few minutes of toxin treatment. The aldo-keto reductase AFTS1 catalyzes the conversion of 2-keto-isovaleric acid (2-KIV) to 2-hydroxy-isovaleric acid (2-HIV) by reduction of its ketone to an alcohol. The acyl-CoA ligase AFT1, the hydrolase AFT2 and the enoyl-CoA hydratases AFT3 and AFT6, but also the polyketide synthase AFT9, the acyl-CoA dehydrogenase AFT10, the cytochrome P450 monooxygenase AFT11 and the oxidoreductase AFT12 are all involved in the biosynthesis of the AK-, AF- and ACT-toxin common EDA structural moiety. The exact function of each enzyme, and of additional enzymes identified within the AF-toxin clusters have still to be determined. This is Reducing polyketide synthase AFT16-1 from Alternaria alternata (Alternaria rot fungus).